A 590-amino-acid polypeptide reads, in one-letter code: Phosphate-repressible phosphate permease pho-4 (590 aa).

8 consecutive transmembrane segments (helical) span residues 6-26 (FDYL…NIGA), 44-64 (YLQA…GVGA), 85-105 (ALLM…LTMA), 118-138 (IMGG…VQWV), 149-169 (VFLA…IIFL), 186-206 (FVMV…LLLW), 220-240 (IAGT…IFLM), and 246-266 (IVIL…PLLL). Over 267-466 (RRGEVPPPPA…GALPEKGKAD (200 aa)) the chain is Cytoplasmic. The interval 297 to 361 (ARRAAQNGDS…PQIKTMVGPR (65 aa)) is disordered. Residues 313 to 322 (VTSSTSNPSA) are compositionally biased toward polar residues. The segment covering 325-345 (DGEKGATITKDDSSYSHDHSE) has biased composition (basic and acidic residues). 4 helical membrane passes run 467 to 487 (VPVW…WTYG), 506 to 525 (GFSM…RLKL), 527 to 547 (VSTT…SGTW), and 561 to 581 (GWFI…GIII).

The protein belongs to the inorganic phosphate transporter (PiT) (TC 2.A.20) family.

The protein localises to the cell membrane. With respect to regulation, phosphate transport activity is competitively inhibited by vanadate and arsenate. In terms of biological role, high-affinity transporter for external inorganic phosphate. Acts probably as a sodium-phosphate symporter. Component of the high affinity phosphate transport system II (ptsII) necessary for scavenging phosphorus from the environment under conditions of limiting phosphorus. This chain is Phosphate-repressible phosphate permease pho-4, found in Neurospora crassa (strain ATCC 24698 / 74-OR23-1A / CBS 708.71 / DSM 1257 / FGSC 987).